A 1657-amino-acid polypeptide reads, in one-letter code: A disintegrin and metalloproteinase with thrombospondin motifs 7 (1657 aa).

An N-terminal signal peptide occupies residues 1–20 (MHRGPSLLLILCALASRVLG). The propeptide occupies 21–220 (PASGLVTEGR…QQQQKRRQQR (200 aa)). A glycan (N-linked (GlcNAc...) asparagine) is linked at Asn-84. Residues 165 to 221 (PGHAQPHVVYKHQGSRKQAQQGDSRPSGTCGMQVPPDLEQQREHWEQQQQKRRQQRS) form a disordered region. The segment covering 180–191 (RKQAQQGDSRPS) has biased composition (polar residues). The Cysteine switch motif lies at 192-199 (GTCGMQVP). Cys-194 lines the Zn(2+) pocket. Positions 226–437 (KWVETLVVAD…GWGLCLDDRP (212 aa)) constitute a Peptidase M12B domain. 11 disulfide bridges follow: Cys-302–Cys-356, Cys-331–Cys-338, Cys-350–Cys-432, Cys-389–Cys-416, Cys-459–Cys-482, Cys-470–Cys-488, Cys-477–Cys-507, Cys-501–Cys-512, Cys-535–Cys-572, Cys-539–Cys-577, and Cys-550–Cys-562. Position 372 (His-372) interacts with Zn(2+). Residue Glu-373 is part of the active site. The Zn(2+) site is built by His-376 and His-382. Positions 447 to 522 (VLPGVLYDVN…VPEGFQPEAV (76 aa)) constitute a Disintegrin domain. One can recognise a TSP type-1 1 domain in the interval 523 to 578 (DGGWSGWSAWSDCSRSCGVGVRSSERQCTQPVPKNRGKYCVGERKRSQLCNLPACP). A glycan (N-linked (GlcNAc...) asparagine) is linked at Asn-622. Positions 683-794 (QTVSRTFKET…PGVHYQYTIQ (112 aa)) are spacer. 3 consecutive TSP type-1 domains span residues 804-863 (PEFS…EPCP), 864-923 (PRWW…NRHV), and 925-978 (CPST…QPCQ). Disordered regions lie at residues 1009-1034 (LAPRPSPASSPKPVSISNAIDEEELD), 1073-1127 (GGWT…GLEQ), 1140-1237 (EDTP…DVVE), 1283-1304 (GRDSPLEPGTPTFSSPELSSQH), and 1317-1384 (TVPT…ARNA). Positions 1211 to 1224 (PQSPIPTQPSPPSI) are enriched in pro residues. 2 stretches are compositionally biased toward polar residues: residues 1293–1304 (PTFSSPELSSQH) and 1327–1342 (PSGQPQTPNLEGTQSP). 4 TSP type-1 domains span residues 1366–1414 (QPSL…SGND), 1417–1477 (CTLA…CQPG), 1479–1522 (TKPP…PEPG), and 1524–1584 (CEES…LCSH). Positions 1587-1627 (WPESSRPCATEDCELVEPPRCERDRLSFNFCETLRLLGRCQ) constitute a PLAC domain.

In terms of assembly, interacts with COMP. Zn(2+) serves as cofactor. N-glycosylated. Can be O-fucosylated by POFUT2 on a serine or a threonine residue found within the consensus sequence C1-X(2)-(S/T)-C2-G of the TSP type-1 repeat domains where C1 and C2 are the first and second cysteine residue of the repeat, respectively. Fucosylated repeats can then be further glycosylated by the addition of a beta-1,3-glucose residue by the glucosyltransferase, B3GALTL. Fucosylation mediates the efficient secretion of ADAMTS family members. Can also be C-glycosylated with one or two mannose molecules on tryptophan residues within the consensus sequence W-X-X-W of the TPRs. N- and C-glycosylations can also facilitate secretion. Post-translationally, O-glycosylated proteoglycan; contains chondroitin sulfate. In terms of processing, may be cleaved by a furin endopeptidase. The precursor is sequentially processed.

It localises to the secreted. It is found in the extracellular space. The protein resides in the extracellular matrix. Metalloprotease. Was previously shown to degrade COMP. However, a later study found no activity against COMP. The chain is A disintegrin and metalloproteinase with thrombospondin motifs 7 (Adamts7) from Mus musculus (Mouse).